The sequence spans 645 residues: Exoribonuclease 2 (645 aa).

One can recognise an RNB domain in the interval 191-517; the sequence is REDLTELNFI…MNHRLLKALI (327 aa). In terms of domain architecture, S1 motif spans 563–645; it reads HIRYSAEIID…DNRSIIAKIV (83 aa).

It belongs to the RNR ribonuclease family. RNase II subfamily.

The protein localises to the cytoplasm. It catalyses the reaction Exonucleolytic cleavage in the 3'- to 5'-direction to yield nucleoside 5'-phosphates.. Involved in mRNA degradation. Hydrolyzes single-stranded polyribonucleotides processively in the 3' to 5' direction. In Baumannia cicadellinicola subsp. Homalodisca coagulata, this protein is Exoribonuclease 2.